A 133-amino-acid chain; its full sequence is Histone H2A (133 aa).

Over residues 1 to 10 the composition is skewed to gly residues; sequence MTGGKSGGKA. Residues 1–24 form a disordered region; sequence MTGGKSGGKASGSKNAQSRSSKAG. 2 positions are modified to N6-acetyllysine: K5 and K9. Q106 carries the post-translational modification N5-methylglutamine. At S130 the chain carries Phosphoserine. The [ST]-Q motif motif lies at 130–131; sequence SQ.

It belongs to the histone H2A family. In terms of assembly, the nucleosome is a histone octamer containing two molecules each of H2A, H2B, H3 and H4 assembled in one H3-H4 heterotetramer and two H2A-H2B heterodimers. The octamer wraps approximately 147 bp of DNA. Phosphorylated to form H2AS128ph (gamma-H2A) in response to DNA double-strand breaks (DSBs) generated by exogenous genotoxic agents and by stalled replication forks. Phosphorylation is dependent on the DNA damage checkpoint kinases mec1/ATR and tel1/ATM, spreads on either side of a detected DSB site and may mark the surrounding chromatin for recruitment of proteins required for DNA damage signaling and repair. Gamma-H2A is removed from the DNA prior to the strand invasion-primer extension step of the repair process and subsequently dephosphorylated. Dephosphorylation is necessary for efficient recovery from the DNA damage checkpoint. Post-translationally, acetylated by esa1 to form H2AK4ac and H2AK7ac.

Its subcellular location is the nucleus. It localises to the chromosome. Functionally, core component of nucleosome which plays a central role in DNA double strand break (DSB) repair. Nucleosomes wrap and compact DNA into chromatin, limiting DNA accessibility to the cellular machineries which require DNA as a template. Histones thereby play a central role in transcription regulation, DNA repair, DNA replication and chromosomal stability. DNA accessibility is regulated via a complex set of post-translational modifications of histones, also called histone code, and nucleosome remodeling. This is Histone H2A (hta1) from Aspergillus clavatus (strain ATCC 1007 / CBS 513.65 / DSM 816 / NCTC 3887 / NRRL 1 / QM 1276 / 107).